The primary structure comprises 322 residues: Glutamyl-Q tRNA(Asp) synthetase (322 aa).

L-glutamate-binding positions include 28-32 (RFAPS) and Glu64. A 'HIGH' region motif is present at residues 31–41 (PSPSGDLHFGS). Cys120, Cys122, Tyr134, and Cys138 together coordinate Zn(2+). L-glutamate is bound by residues Tyr191 and Arg209. Residues 247 to 251 (KLSKQ) carry the 'KMSKS' region motif. Lys250 contributes to the ATP binding site.

It belongs to the class-I aminoacyl-tRNA synthetase family. GluQ subfamily. The cofactor is Zn(2+).

In terms of biological role, catalyzes the tRNA-independent activation of glutamate in presence of ATP and the subsequent transfer of glutamate onto a tRNA(Asp). Glutamate is transferred on the 2-amino-5-(4,5-dihydroxy-2-cyclopenten-1-yl) moiety of the queuosine in the wobble position of the QUC anticodon. The chain is Glutamyl-Q tRNA(Asp) synthetase from Pectobacterium atrosepticum (strain SCRI 1043 / ATCC BAA-672) (Erwinia carotovora subsp. atroseptica).